Here is a 1476-residue protein sequence, read N- to C-terminus: Cystic fibrosis transmembrane conductance regulator (1476 aa).

Residues 1–77 are Cytoplasmic-facing; it reads MQKSPLEKAS…QLIHALRRCF (77 aa). A helical transmembrane segment spans residues 78–98; sequence FWRFLFYGILLYLGEVTKAVQ. Positions 81–365 constitute an ABC transmembrane type-1 1 domain; sequence FLFYGILLYL…TAVQIWYDSF (285 aa). Residues 99–122 are Extracellular-facing; it reads PVLLGRIIASYDPENKVERSIAIY. Residues 123–146 form a helical membrane-spanning segment; it reads LGIGLCLLFIVRTLLLHPAIFGLH. At 147 to 195 the chain is on the cytoplasmic side; it reads RIGMQMRTAMFSLIYKKTLKLSSRVLDKISIGQLVSLLSNNLNKFDEGL. Residues 196–216 traverse the membrane as a helical segment; the sequence is ALAHFIWIAPLQVTLLMGLLW. Residues 217–222 are Extracellular-facing; sequence DLLQFS. The chain crosses the membrane as a helical span at residues 223-243; the sequence is AFCGLGLLIILVIFQAILGKM. Residues 244-298 lie on the Cytoplasmic side of the membrane; the sequence is MVKYRDQRAAKINERLVITSEIIDNIYSVKAYCWESAMEKMIENLREVELKMTRK. The helical transmembrane segment at 299 to 319 threads the bilayer; the sequence is AAYMRFFTSSAFFFSGFFVVF. Topologically, residues 320–339 are extracellular; the sequence is LSVLPYTVINGIVLRKIFTT. A helical membrane pass occupies residues 340-358; the sequence is ISFCIVLRMSVTRQFPTAV. Residues 359-853 lie on the Cytoplasmic side of the membrane; it reads QIWYDSFGMI…YLRYFTLHKG (495 aa). ATP is bound by residues Trp-401, 458-465, and Gln-493; that span reads GSTGSGKT. Residues 423–646 enclose the ABC transporter 1 domain; sequence SDENNVSFSH…RPDFSSKLMG (224 aa). Residue Cys-524 is the site of S-palmitoyl cysteine attachment. Residues Ser-549 and Ser-660 each carry the phosphoserine modification. Residues 654–826 are disordered R region; it reads TEERRSSILT…EEINEEDLKE (173 aa). The residue at position 670 (Ser-670) is a Phosphoserine; by PKA. 3 positions are modified to phosphoserine: Ser-684, Ser-698, and Ser-710. A Phosphothreonine modification is found at Thr-715. 5 positions are modified to phosphoserine: Ser-732, Ser-763, Ser-785, Ser-790, and Ser-808. The helical transmembrane segment at 854-874 threads the bilayer; sequence LLLVLIWCVLVFLVEVAASLF. The 300-residue stretch at 854-1153 folds into the ABC transmembrane type-1 2 domain; the sequence is LLLVLIWCVL…SSIDTDSLMR (300 aa). The Extracellular segment spans residues 875-913; the sequence is VLWLLKNNPVNSGNNGTKISNSSYVVIITSTSFYYIFYI. N-linked (GlcNAc...) asparagine glycosylation is found at Asn-889 and Asn-895. A discontinuously helical transmembrane segment spans residues 914-934; it reads YVGVADTLLALSLFRGLPLVH. Topologically, residues 935–985 are cytoplasmic; sequence TLITASKILHRKMLHSILHAPMSTISKLKAGGILNRFSKDIAILDDFLPLT. The helical transmembrane segment at 986–1006 threads the bilayer; that stretch reads IFDFIQLVFIVIGAIIVVSAL. Over 1007 to 1008 the chain is Extracellular; the sequence is QP. The helical transmembrane segment at 1009–1029 threads the bilayer; sequence YIFLATVPGLVVFILLRAYFL. At 1030–1090 the chain is on the cytoplasmic side; it reads HTAQQLKQLE…TANWFMYLAT (61 aa). Residues 1091–1111 form a helical membrane-spanning segment; the sequence is LRWFQMRIDMIFVLFFIVVTF. The Extracellular segment spans residues 1112–1125; sequence ISILTTGEGEGTAG. The helical transmembrane segment at 1126–1146 threads the bilayer; sequence IILTLAMNIMSTLQWAVNSSI. Residues 1147-1476 lie on the Cytoplasmic side of the membrane; the sequence is DTDSLMRSVS…TEEEVQETRL (330 aa). Positions 1208 to 1439 constitute an ABC transporter 2 domain; it reads VKDLTVKYMD…KSIFQQAISS (232 aa). Residues Tyr-1215 and 1240–1247 each bind ATP; that span reads GRTGSGKS. The interval 1382-1476 is interaction with GORASP2; that stretch reads RVLKQAFAGC…TEEEVQETRL (95 aa). Residue Cys-1391 is the site of S-palmitoyl cysteine attachment. Phosphoserine is present on residues Ser-1440 and Ser-1452. Residues 1446 to 1476 form a disordered region; that stretch reads FQGRHSSKHKPRTQITALKEETEEEVQETRL. The segment covering 1466-1476 has biased composition (acidic residues); it reads ETEEEVQETRL. The PDZ-binding signature appears at 1474–1476; the sequence is TRL.

It belongs to the ABC transporter superfamily. ABCC family. CFTR transporter (TC 3.A.1.202) subfamily. In terms of assembly, monomer; does not require oligomerization for channel activity. May form oligomers in the membrane. Interacts with SLC26A3, SLC26A6 and NHERF1. Interacts with SHANK2. Interacts with MYO6. Interacts (via C-terminus) with GOPC (via PDZ domain); this promotes CFTR internalization and thereby decreases channel activity. Interacts with SLC4A7 through NHERF1. Found in a complex with MYO5B and RAB11A. Interacts with ANO1. Interacts with SLC26A8. Interacts with AHCYL1; the interaction increases CFTR activity. Interacts with CSE1L. The core-glycosylated form interacts with GORASP2 (via PDZ GRASP-type 1 domain) in respone to ER stress. Interacts with MARCHF2; the interaction leads to CFTR ubiqtuitination and degradation. Interacts with ADGRG2. Post-translationally, N-glycosylated. Phosphorylated; cAMP treatment promotes phosphorylation and activates the channel. Dephosphorylation decreases the ATPase activity (in vitro). Phosphorylation at PKA sites activates the channel. Phosphorylation at PKC sites enhances the response to phosphorylation by PKA. Phosphorylated by AMPK; this inhibits channel activity. In terms of processing, ubiquitinated, leading to its degradation in the lysosome. Deubiquitination by USP10 in early endosomes enhances its endocytic recycling to the cell membrane. Ubiquitinated by RNF185 during ER stress. Ubiquitinated by MARCHF2. In terms of tissue distribution, expressed in the epididymis (at protein level). In the initial segment of the epididymis, detected on both the luminal and basolateral sides of the ducts where it is expressed in the duct columnar cells as well as in the interstitial smooth muscle cells. Expressed in sperm in the caput. In the cauda, detected along the luminal border but not continuously and is also expressed on the basolateral surface. Within the caudal lumen, detected on sperm. Isoform 1: Expressed in a variety of epithelial tissues including colon, kidney, lung, small intestine, pancreatic duct and testis. Isoform 2: Expressed only in testis. Isoform 3: Expressed only in testis.

Its subcellular location is the apical cell membrane. It localises to the early endosome membrane. It is found in the cell membrane. The protein resides in the recycling endosome membrane. The protein localises to the endoplasmic reticulum membrane. Its subcellular location is the nucleus. The enzyme catalyses ATP + H2O + closed Cl(-) channel = ADP + phosphate + open Cl(-) channel.. It catalyses the reaction chloride(in) = chloride(out). The catalysed reaction is hydrogencarbonate(in) = hydrogencarbonate(out). It carries out the reaction ATP + H2O = ADP + phosphate + H(+). Epithelial ion channel that plays an important role in the regulation of epithelial ion and water transport and fluid homeostasis. Mediates the transport of chloride ions across the cell membrane. Possesses an intrinsic ATPase activity and utilizes ATP to gate its channel; the passive flow of anions through the channel is gated by cycles of ATP binding and hydrolysis by the ATP-binding domains. The ion channel is also permeable to HCO(3)(-); selectivity depends on the extracellular chloride concentration. Exerts its function also by modulating the activity of other ion channels and transporters. Contributes to the regulation of the pH and the ion content of the epithelial fluid layer. Modulates the activity of the epithelial sodium channel (ENaC) complex, in part by regulating the cell surface expression of the ENaC complex. May regulate bicarbonate secretion and salvage in epithelial cells by regulating the transporter SLC4A7. Can inhibit the chloride channel activity of ANO1. Plays a role in the chloride and bicarbonate homeostasis during sperm epididymal maturation and capacitation. This is Cystic fibrosis transmembrane conductance regulator from Mus musculus (Mouse).